The primary structure comprises 451 residues: Metalloprotease MJ0996 (451 aa).

This sequence belongs to the peptidase U62 family.

Its function is as follows. Probable metalloprotease. The polypeptide is Metalloprotease MJ0996 (Methanocaldococcus jannaschii (strain ATCC 43067 / DSM 2661 / JAL-1 / JCM 10045 / NBRC 100440) (Methanococcus jannaschii)).